The primary structure comprises 191 residues: uncharacterized protein (191 aa).

To E.coli YecM.

This is an uncharacterized protein from Haemophilus influenzae (strain ATCC 51907 / DSM 11121 / KW20 / Rd).